We begin with the raw amino-acid sequence, 1791 residues long: Sodium channel protein type 11 subunit alpha (1791 aa).

Residues 1–126 (MDDRCYPVIF…SIRSLAIRVS (126 aa)) lie on the Cytoplasmic side of the membrane. The stretch at 115 to 408 (FNSIRSLAIR…VTMAYEEQNK (294 aa)) is one I repeat. Residues 127 to 148 (VHSLFSMFIIGTVIINCVFMAT) traverse the membrane as a helical segment. Topologically, residues 149-156 (GPAKNSNS) are extracellular. The chain crosses the membrane as a helical span at residues 157-180 (NNTDIAECVFTGIYIFEALIKILA). The Cytoplasmic portion of the chain corresponds to 181-192 (RGFILDEFSFLR). Residues 193–212 (DPWNWLDSIVIGIAIVSYIP) form a helical membrane-spanning segment. At 213–219 (GITIKLL) the chain is on the extracellular side. A helical; Voltage-sensor transmembrane segment spans residues 220–239 (PLRTFRVFRALKAISVVSRL). The Cytoplasmic portion of the chain corresponds to 240-255 (KVIVGALLRSVKKLVN). Residues 256–269 (VIILTFFCLSIFAL) traverse the membrane as a helical segment. Residues 270–344 (VGQQLFMGSL…PDYNYTNFDN (75 aa)) lie on the Extracellular side of the membrane. The cysteines at positions 283 and 322 are disulfide-linked. Asparagine 290 and asparagine 338 each carry an N-linked (GlcNAc...) asparagine glycan. Positions 345 to 369 (FGWSFLAMFRLMTQDSWEKLYQQTL) form an intramembrane region, pore-forming. At 370-376 (RTTGLYS) the chain is on the extracellular side. Residues 377–402 (VFFFIVVIFLGSFYLINLTLAVVTMA) traverse the membrane as a helical segment. Residues 403–572 (YEEQNKNVAA…WLCVKKVLRT (170 aa)) are Cytoplasmic-facing. The stretch at 559–833 (CCPQWLCVKK…EGEARKTKVQ (275 aa)) is one II repeat. The chain crosses the membrane as a helical span at residues 573-596 (VMTDPFTELAITICIIINTVFLAM). Topologically, residues 597-607 (EHHKMEASFEK) are extracellular. The chain crosses the membrane as a helical span at residues 608–631 (MLNIGNLVFTSIFIAEMCLKIIAL). Topologically, residues 632–639 (DPYHYFRR) are cytoplasmic. The helical transmembrane segment at 640–659 (GWNIFDSIVALLSFADVMNC) threads the bilayer. Topologically, residues 660-667 (VLQKRSWP) are extracellular. Residues 668-687 (FLRSFRVLRVFKLAKSWPTL) form a helical; Voltage-sensor membrane-spanning segment. Topologically, residues 688 to 702 (NTLIKIIGNSVGALG) are cytoplasmic. The helical transmembrane segment at 703–725 (SLTVVLVIVIFIFSVVGMQLFGR) threads the bilayer. Over 726–753 (SFNSQKSPKLCNPTGPTVSCLRHWHMGD) the chain is Extracellular. The pore-forming intramembrane region spans 754–774 (FWHSFLVVFRILCGEWIENMW). The Extracellular segment spans residues 775-785 (ECMQEANASSS). Cysteines 776 and 787 form a disulfide. The N-linked (GlcNAc...) asparagine glycan is linked to asparagine 781. Residues 786–811 (LCVIVFILITVIGKLVVLNLFIALLL) traverse the membrane as a helical segment. The Cytoplasmic segment spans residues 812–1051 (NSFSNEERNG…WWNLRKTCYQ (240 aa)). Residues 1044–1339 (NLRKTCYQIV…KKYYNAMKKL (296 aa)) form an III repeat. Residues 1052 to 1074 (IVKHSWFESFIIFVILLSSGALI) traverse the membrane as a helical segment. The Extracellular portion of the chain corresponds to 1075-1088 (FEDVHLENQPKIQE). The helical transmembrane segment at 1089 to 1114 (LLNCTDIIFTHIFILEMVLKWVAFGF) threads the bilayer. Over 1115–1120 (GKYFTS) the chain is Cytoplasmic. Residues 1121–1138 (AWCCLDFIIVIVSVTTLI) form a helical membrane-spanning segment. Position 1139 (asparagine 1139) is a topological domain, extracellular. A helical; Voltage-sensor transmembrane segment spans residues 1140–1161 (LMELKSFRTLRALRPLRALSQF). The Cytoplasmic portion of the chain corresponds to 1162-1180 (EGMKVVVNALIGAIPAILN). The chain crosses the membrane as a helical span at residues 1181–1202 (VLLVCLIFWLVFCILGVYFFSG). Residues 1203 to 1243 (KFGKCINGTDSVINYTIITNKSQCESGNFSWINQKVNFDNV) lie on the Extracellular side of the membrane. N-linked (GlcNAc...) asparagine glycans are attached at residues asparagine 1209, asparagine 1216, asparagine 1222, and asparagine 1230. An intramembrane region (pore-forming) is located at residues 1244–1265 (GNAYLALLQVATFKGWMDIIYA). The Extracellular portion of the chain corresponds to 1266 to 1281 (AVDSTEKEQQPEFESN). A helical membrane pass occupies residues 1282-1308 (SLGYIYFVVFIIFGSFFTLNLFIGVII). Topologically, residues 1309 to 1361 (DNFNQQQKKLGGQDIFMTEEQKKYYNAMKKLGSKKPQKPIPRPLNKCQGLVFD) are cytoplasmic. One copy of the IV repeat lies at 1348 to 1639 (IPRPLNKCQG…WEKFDPEATQ (292 aa)). A helical membrane pass occupies residues 1362 to 1385 (IVTSQIFDIIIISLIILNMISMMA). The Extracellular segment spans residues 1386–1396 (ESYNQPKAMKS). The helical transmembrane segment at 1397 to 1420 (ILDHLNWVFVVIFTLECLIKIFAL) threads the bilayer. Residues 1421-1426 (RQYYFT) are Cytoplasmic-facing. A helical transmembrane segment spans residues 1427–1450 (NGWNLFDCVVVLLSIVSTMISTLE). Residues 1451–1461 (NQEHIPFPPTL) lie on the Extracellular side of the membrane. A helical; Voltage-sensor membrane pass occupies residues 1462-1484 (FRIVRLARIGRILRLVRAARGIR). Residues 1485–1499 (TLLFALMMSLPSLFN) are Cytoplasmic-facing. The helical transmembrane segment at 1500-1522 (IGLLLFLIMFIYAILGMNWFSKV) threads the bilayer. Over 1523–1536 (NPESGIDDIFNFKT) the chain is Extracellular. The segment at residues 1537 to 1559 (FASSMLCLFQISTSAGWDSLLSP) is an intramembrane region (pore-forming). Over 1560–1579 (MLRSKESCNSSSENCHLPGI) the chain is Extracellular. Residue asparagine 1568 is glycosylated (N-linked (GlcNAc...) asparagine). Residues 1580-1604 (ATSYFVSYIIISFLIVVNMYIAVIL) form a helical membrane-spanning segment. Over 1605-1791 (ENFNTATEES…GVAKGKVHCD (187 aa)) the chain is Cytoplasmic.

Belongs to the sodium channel (TC 1.A.1.10) family. Nav1.9/SCN11A subfamily. As to quaternary structure, the voltage-resistant sodium channel consists of an ion conducting pore forming alpha-subunit regulated by one or more auxiliary subunits SCN1B, SCN2B and SCN3B. Expressed in the dorsal root ganglia and trigeminal ganglia, olfactory bulb, hippocampus, cerebellar cortex, spinal cord, spleen, small intestine and placenta.

It is found in the cell membrane. The enzyme catalyses Na(+)(in) = Na(+)(out). Its activity is regulated as follows. Activity is not sensitive to inhibition by tetrodotoxin. Its function is as follows. Sodium channel mediating the voltage-dependent sodium ion permeability of excitable membranes. Assuming opened or closed conformations in response to the voltage difference across the membrane, the protein forms a sodium-selective channel through which sodium ions may pass in accordance with their electrochemical gradient. Involved in membrane depolarization during action potential in nociceptors which function as key relay stations for the electrical transmission of pain signals from the periphery to the central nervous system. Also involved in rapid BDNF-evoked neuronal depolarization. The protein is Sodium channel protein type 11 subunit alpha of Homo sapiens (Human).